Reading from the N-terminus, the 183-residue chain is Type II secretion system protein H (183 aa).

Positions 1 to 8 (MRRHRQSG) are cleaved as a propeptide — leader sequence. Phenylalanine 9 carries the post-translational modification N-methylphenylalanine. A helical membrane pass occupies residues 9 to 28 (FTLLEVLLVAMLMGLVATAV).

Belongs to the GSP H family. Type II secretion is composed of four main components: the outer membrane complex, the inner membrane complex, the cytoplasmic secretion ATPase and the periplasm-spanning pseudopilus. Interacts with core component ExeG. Post-translationally, cleaved by prepilin peptidase. In terms of processing, methylated by prepilin peptidase at the amino group of the N-terminal phenylalanine once the leader sequence is cleaved by prepilin peptidase.

It is found in the cell inner membrane. Functionally, component of the type II secretion system required for the energy-dependent secretion of extracellular factors such as proteases and toxins from the periplasm. Part of the pseudopilus tip complex that is critical for the recognition and binding of secretion substrates. In Aeromonas hydrophila, this protein is Type II secretion system protein H (exeH).